Here is a 288-residue protein sequence, read N- to C-terminus: Thymidylate synthase (288 aa).

Residue R21 coordinates dUMP. Residue N51 coordinates (6R)-5,10-methylene-5,6,7,8-tetrahydrofolate. Position 150 to 151 (R150 to R151) interacts with dUMP. C170 serves as the catalytic Nucleophile. Residues R190–D193, N201, and H231–Y233 each bind dUMP. D193 serves as a coordination point for (6R)-5,10-methylene-5,6,7,8-tetrahydrofolate. A287 is a binding site for (6R)-5,10-methylene-5,6,7,8-tetrahydrofolate.

It belongs to the thymidylate synthase family. Bacterial-type ThyA subfamily. Homodimer.

The protein localises to the cytoplasm. It catalyses the reaction dUMP + (6R)-5,10-methylene-5,6,7,8-tetrahydrofolate = 7,8-dihydrofolate + dTMP. Its pathway is pyrimidine metabolism; dTTP biosynthesis. Catalyzes the reductive methylation of 2'-deoxyuridine-5'-monophosphate (dUMP) to 2'-deoxythymidine-5'-monophosphate (dTMP) while utilizing 5,10-methylenetetrahydrofolate (mTHF) as the methyl donor and reductant in the reaction, yielding dihydrofolate (DHF) as a by-product. This enzymatic reaction provides an intracellular de novo source of dTMP, an essential precursor for DNA biosynthesis. This is Thymidylate synthase from Aster yellows witches'-broom phytoplasma (strain AYWB).